We begin with the raw amino-acid sequence, 290 residues long: MQFQIGDMVARKSYQMDVLFRIIGIEQTSKGNSIAILHGDEVRLIADSDFSDLVAVKKDEQMMRKKKDESRMNESLELLRQDYKLLREKQEYYATSQYQHQEHYFHMPGKVLHLDGDEAYLKKCLNVYKKIGVPVYGIHCHEKKMSASIEVLLDKYRPDILVITGHDAYSKQKGGIDDLNAYRHSKHFVETVQTARKKIPHLDQLVIFAGACQSHFESLIRAGANFASSPSRVNIHALDPVYIVAKISFTPFMERINVWEVLRNTLTREKGLGGIETRGVLRIGMPYKSN.

This sequence belongs to the peptidase U57 family.

It is found in the forespore outer membrane. Cleaves the spore coat proteins SpoIVA and SafA. May cooperate with tgl to mediate the temperature-dependent cross-linking of coat proteins like GerQ. The sequence is that of Sporulation-specific protease YabG (yabG) from Bacillus subtilis (strain 168).